A 429-amino-acid polypeptide reads, in one-letter code: Aspartate--tRNA(Asp/Asn) ligase (429 aa).

E167 serves as a coordination point for L-aspartate. Residues 189–192 form an aspartate region; that stretch reads QLYK. L-aspartate is bound at residue R210. ATP is bound by residues 210–212 and E352; that span reads RAE. The Mg(2+) site is built by E352 and S355. Residues S355 and R359 each coordinate L-aspartate. 400–403 contributes to the ATP binding site; that stretch reads GLAR.

It belongs to the class-II aminoacyl-tRNA synthetase family. Type 2 subfamily. Homodimer. Mg(2+) serves as cofactor.

It localises to the cytoplasm. It catalyses the reaction tRNA(Asx) + L-aspartate + ATP = L-aspartyl-tRNA(Asx) + AMP + diphosphate. Functionally, aspartyl-tRNA synthetase with relaxed tRNA specificity since it is able to aspartylate not only its cognate tRNA(Asp) but also tRNA(Asn). Reaction proceeds in two steps: L-aspartate is first activated by ATP to form Asp-AMP and then transferred to the acceptor end of tRNA(Asp/Asn). The chain is Aspartate--tRNA(Asp/Asn) ligase from Sulfurisphaera tokodaii (strain DSM 16993 / JCM 10545 / NBRC 100140 / 7) (Sulfolobus tokodaii).